Reading from the N-terminus, the 478-residue chain is 7-dehydrocholesterol reductase (478 aa).

The disordered stretch occupies residues 1 to 28 (MMASDRVRKRHKGSANGAQTVEKEPSKE). 6 consecutive transmembrane segments (helical) span residues 43–63 (LSGV…FIMA), 97–117 (WAAA…YMCV), 180–200 (WIPL…FAFI), 269–289 (VTNS…DFFW), 309–329 (LGWG…LYLV), and 333–353 (IQLS…GYYI). NADP(+)-binding positions include lysine 361, arginine 365, methionine 398, tryptophan 403, and 410–411 (NY). The helical transmembrane segment at 424–444 (ACGGNHLLPYFYIIYMTILLV) threads the bilayer. NADP(+)-binding positions include aspartate 450, 454–458 (CSNKY), and tyrosine 465.

It belongs to the ERG4/ERG24 family.

It localises to the endoplasmic reticulum membrane. It catalyses the reaction cholesterol + NADP(+) = 7-dehydrocholesterol + NADPH + H(+). The enzyme catalyses 7-dehydrodesmosterol + NADPH + H(+) = desmosterol + NADP(+). The protein operates within steroid biosynthesis; cholesterol biosynthesis. Functionally, catalyzes the last step of the cholesterol synthesis pathway, which transforms cholesta-5,7-dien-3beta-ol (7-dehydrocholesterol,7-DHC) into cholesterol by reducing the C7-C8 double bond of its sterol core. Can also metabolize cholesta-5,7,24-trien-3beta-ol (7-dehydrodemosterol, 7-DHD) to desmosterol, which is then metabolized by the Delta(24)-sterol reductase (DHCR24) to cholesterol. Modulates ferroptosis (a form of regulated cell death driven by iron-dependent lipid peroxidation) through the metabolic breakdown of the anti-ferroptotic metabolites 7-DHC and 7-DHD which, when accumulated, divert the propagation of peroxyl radical-mediated damage from phospholipid components to its sterol core, protecting plasma and mitochondrial membranes from phospholipid autoxidation. In Danio rerio (Zebrafish), this protein is 7-dehydrocholesterol reductase (dhcr7).